Here is a 554-residue protein sequence, read N- to C-terminus: Arginine--tRNA ligase (554 aa).

Positions 129–139 (ANPTGPLHIGH) match the 'HIGH' region motif.

The protein belongs to the class-I aminoacyl-tRNA synthetase family. In terms of assembly, monomer.

The protein resides in the cytoplasm. It carries out the reaction tRNA(Arg) + L-arginine + ATP = L-arginyl-tRNA(Arg) + AMP + diphosphate. The chain is Arginine--tRNA ligase from Geobacter sp. (strain M21).